A 158-amino-acid polypeptide reads, in one-letter code: 2-C-methyl-D-erythritol 2,4-cyclodiphosphate synthase (158 aa).

Asp9 and His11 together coordinate a divalent metal cation. 4-CDP-2-C-methyl-D-erythritol 2-phosphate-binding positions include Asp9 to His11 and His35 to Ser36. Residue His43 coordinates a divalent metal cation. 4-CDP-2-C-methyl-D-erythritol 2-phosphate is bound by residues Asp57–Gly59, Phe62–Asp66, Thr133–Glu136, Phe140, and Arg143.

It belongs to the IspF family. In terms of assembly, homotrimer. Requires a divalent metal cation as cofactor.

It catalyses the reaction 4-CDP-2-C-methyl-D-erythritol 2-phosphate = 2-C-methyl-D-erythritol 2,4-cyclic diphosphate + CMP. It participates in isoprenoid biosynthesis; isopentenyl diphosphate biosynthesis via DXP pathway; isopentenyl diphosphate from 1-deoxy-D-xylulose 5-phosphate: step 4/6. In terms of biological role, involved in the biosynthesis of isopentenyl diphosphate (IPP) and dimethylallyl diphosphate (DMAPP), two major building blocks of isoprenoid compounds. Catalyzes the conversion of 4-diphosphocytidyl-2-C-methyl-D-erythritol 2-phosphate (CDP-ME2P) to 2-C-methyl-D-erythritol 2,4-cyclodiphosphate (ME-CPP) with a corresponding release of cytidine 5-monophosphate (CMP). The protein is 2-C-methyl-D-erythritol 2,4-cyclodiphosphate synthase of Pasteurella multocida (strain Pm70).